A 224-amino-acid polypeptide reads, in one-letter code: UPF0758 protein LCA_0852 (224 aa).

Residues 100–222 (VVASSQMVGQ…YLSLREEGYL (123 aa)) enclose the MPN domain. Zn(2+) is bound by residues histidine 171, histidine 173, and aspartate 184. A JAMM motif motif is present at residues 171 to 184 (HNHPSGQLAPSTQD).

The protein belongs to the UPF0758 family.

The protein is UPF0758 protein LCA_0852 of Latilactobacillus sakei subsp. sakei (strain 23K) (Lactobacillus sakei subsp. sakei).